Reading from the N-terminus, the 330-residue chain is 6-phosphogluconolactonase (330 aa).

Belongs to the cycloisomerase 2 family.

It carries out the reaction 6-phospho-D-glucono-1,5-lactone + H2O = 6-phospho-D-gluconate + H(+). The protein operates within carbohydrate degradation; pentose phosphate pathway; D-ribulose 5-phosphate from D-glucose 6-phosphate (oxidative stage): step 2/3. Functionally, catalyzes the hydrolysis of 6-phosphogluconolactone to 6-phosphogluconate. This chain is 6-phosphogluconolactonase, found in Erwinia tasmaniensis (strain DSM 17950 / CFBP 7177 / CIP 109463 / NCPPB 4357 / Et1/99).